A 226-amino-acid chain; its full sequence is Cobalt transport protein CbiM 2 (226 aa).

A run of 6 helical transmembrane segments spans residues 6–26 (GFLP…VVAY), 43–63 (MLLG…MPSV), 75–95 (LGAI…VLLF), 107–127 (TLGA…AAVF), 135–155 (FPFG…TYVT), and 181–201 (VFAL…VVVM).

This sequence belongs to the CbiM family. As to quaternary structure, forms an energy-coupling factor (ECF) transporter complex composed of an ATP-binding protein (A component, CbiO), a transmembrane protein (T component, CbiQ) and 2 possible substrate-capture proteins (S components, CbiM and CbiN) of unknown stoichimetry.

It localises to the cell inner membrane. Its pathway is cofactor biosynthesis; adenosylcobalamin biosynthesis. Functionally, part of the energy-coupling factor (ECF) transporter complex CbiMNOQ involved in cobalt import. In Pelobacter propionicus (strain DSM 2379 / NBRC 103807 / OttBd1), this protein is Cobalt transport protein CbiM 2.